The following is a 371-amino-acid chain: Cytochrome b (371 aa).

The next 4 helical transmembrane spans lie at 25–45 (FGSM…FLAV), 69–90 (WMVQ…YIHI), 105–125 (WLSG…GYVL), and 170–190 (FFAL…LHVL). Positions 75 and 89 each coordinate heme b. Histidine 174 and histidine 188 together coordinate heme b. Histidine 193 provides a ligand contact to a ubiquinone. The next 4 membrane-spanning stretches (helical) occupy residues 218–238 (MKDL…ISFF), 280–300 (LGGA…PFIH), 312–332 (LMQL…WAAT), and 339–358 (FISI…ISNP).

It belongs to the cytochrome b family. As to quaternary structure, the cytochrome bc1 complex contains 3 respiratory subunits (MT-CYB, CYC1 and UQCRFS1), 2 core proteins (UQCRC1 and UQCRC2) and probably 6 low-molecular weight proteins. The cofactor is heme b.

It is found in the mitochondrion inner membrane. In terms of biological role, component of the ubiquinol-cytochrome c reductase complex (complex III or cytochrome b-c1 complex) that is part of the mitochondrial respiratory chain. The b-c1 complex mediates electron transfer from ubiquinol to cytochrome c. Contributes to the generation of a proton gradient across the mitochondrial membrane that is then used for ATP synthesis. The protein is Cytochrome b (MT-CYB) of Boa constrictor (Boa).